Reading from the N-terminus, the 704-residue chain is 1,4-alpha-glucan-branching enzyme (704 aa).

(1,4-alpha-D-glucosyl)n contacts are provided by tryptophan 94 and lysine 131. The residue at position 190 (serine 190) is a Phosphoserine. Aspartate 356 serves as the catalytic Nucleophile. The Proton donor role is filled by glutamate 417.

This sequence belongs to the glycosyl hydrolase 13 family. GlgB subfamily.

Its subcellular location is the cytoplasm. It catalyses the reaction Transfers a segment of a (1-&gt;4)-alpha-D-glucan chain to a primary hydroxy group in a similar glucan chain.. It participates in glycan biosynthesis; glycogen biosynthesis. In terms of biological role, glycogen-branching enzyme participates in the glycogen biosynthetic process along with glycogenin and glycogen synthase. Generates alpha-1,6-glucosidic branches from alpha-1,4-linked glucose chains, to increase solubility of the glycogen polymer. This Saccharomyces cerevisiae (strain ATCC 204508 / S288c) (Baker's yeast) protein is 1,4-alpha-glucan-branching enzyme (GLC3).